The following is a 397-amino-acid chain: Succinyl-diaminopimelate desuccinylase (397 aa).

Residue His73 participates in Zn(2+) binding. Residue Asp75 is part of the active site. Asp106 lines the Zn(2+) pocket. Residue Glu140 is the Proton acceptor of the active site. Zn(2+)-binding residues include Glu141, Glu169, and His366.

Belongs to the peptidase M20A family. DapE subfamily. In terms of assembly, homodimer. Zn(2+) serves as cofactor. It depends on Co(2+) as a cofactor.

The catalysed reaction is N-succinyl-(2S,6S)-2,6-diaminopimelate + H2O = (2S,6S)-2,6-diaminopimelate + succinate. It functions in the pathway amino-acid biosynthesis; L-lysine biosynthesis via DAP pathway; LL-2,6-diaminopimelate from (S)-tetrahydrodipicolinate (succinylase route): step 3/3. Catalyzes the hydrolysis of N-succinyl-L,L-diaminopimelic acid (SDAP), forming succinate and LL-2,6-diaminopimelate (DAP), an intermediate involved in the bacterial biosynthesis of lysine and meso-diaminopimelic acid, an essential component of bacterial cell walls. The protein is Succinyl-diaminopimelate desuccinylase of Rhizobium meliloti (strain 1021) (Ensifer meliloti).